Reading from the N-terminus, the 208-residue chain is Uracil phosphoribosyltransferase (208 aa).

5-phospho-alpha-D-ribose 1-diphosphate-binding positions include Arg-78, Arg-103, and 130–138 (DPMLATANS). Residues Ile-193 and 198-200 (GDA) contribute to the uracil site. Residue Asp-199 participates in 5-phospho-alpha-D-ribose 1-diphosphate binding.

It belongs to the UPRTase family. It depends on Mg(2+) as a cofactor.

It carries out the reaction UMP + diphosphate = 5-phospho-alpha-D-ribose 1-diphosphate + uracil. It participates in pyrimidine metabolism; UMP biosynthesis via salvage pathway; UMP from uracil: step 1/1. With respect to regulation, allosterically activated by GTP. In terms of biological role, catalyzes the conversion of uracil and 5-phospho-alpha-D-ribose 1-diphosphate (PRPP) to UMP and diphosphate. The sequence is that of Uracil phosphoribosyltransferase from Brucella melitensis biotype 2 (strain ATCC 23457).